The chain runs to 172 residues: Carotene biosynthesis-related protein CBR, chloroplastic (172 aa).

Residues 41-66 (AENNPSTPPPSSPSPPPPPPTPAAPT) are disordered. Positions 46-63 (STPPPSSPSPPPPPPTPA) are enriched in pro residues. 2 consecutive transmembrane segments (helical) span residues 111 to 131 (PTLI…PAFA) and 152 to 172 (FAMI…IALF).

It belongs to the ELIP/psbS family.

It localises to the plastid. The protein resides in the chloroplast membrane. Functionally, putative zeaxanthin binding protein. That forms photoprotective complexes within the light-harvesting antennae. The sequence is that of Carotene biosynthesis-related protein CBR, chloroplastic (CBR) from Dunaliella salina (Green alga).